A 327-amino-acid chain; its full sequence is Zinc transport protein ZntB (327 aa).

The Cytoplasmic portion of the chain corresponds to 1-273 (MEGIKGSEVN…SRRTYTMSLM (273 aa)). The chain crosses the membrane as a helical span at residues 274–294 (AMVFLPSTFLTGLFGVNLGGI). The Periplasmic segment spans residues 295–300 (PGGGYQ). Residues 301-321 (FGFSAFCIMLVVLIGGVAWWL) traverse the membrane as a helical segment. The Cytoplasmic portion of the chain corresponds to 322-327 (HRSKWL).

The protein belongs to the CorA metal ion transporter (MIT) (TC 1.A.35) family.

It is found in the cell inner membrane. The catalysed reaction is Zn(2+)(out) + H(+)(out) = Zn(2+)(in) + H(+)(in). Zinc transporter. Acts as a Zn(2+):proton symporter, which likely mediates zinc ion uptake. The chain is Zinc transport protein ZntB from Enterobacter sp. (strain 638).